The sequence spans 395 residues: Peptide-N(4)-(N-acetyl-beta-glucosaminyl)asparagine amidase (395 aa).

Zn(2+)-binding residues include Cys131, Cys134, Cys172, and Cys175. Cys198 serves as the catalytic Nucleophile. Active-site residues include His232 and Asp249. Glu252 is a binding site for substrate. The disordered stretch occupies residues 363–395 (PELTKTTPSTDLPSGRQSGSTEWTKSRGENGES). The span at 366–385 (TKTTPSTDLPSGRQSGSTEW) shows a compositional bias: polar residues. Over residues 386–395 (TKSRGENGES) the composition is skewed to basic and acidic residues.

This sequence belongs to the transglutaminase-like superfamily. PNGase family. It depends on Zn(2+) as a cofactor.

Its subcellular location is the cytoplasm. The enzyme catalyses Hydrolysis of an N(4)-(acetyl-beta-D-glucosaminyl)asparagine residue in which the glucosamine residue may be further glycosylated, to yield a (substituted) N-acetyl-beta-D-glucosaminylamine and a peptide containing an aspartate residue.. Specifically deglycosylates the denatured form of N-linked glycoproteins in the cytoplasm and assists their proteasome-mediated degradation. Cleaves the beta-aspartyl-glucosamine (GlcNAc) of the glycan and the amide side chain of Asn, converting Asn to Asp. Prefers proteins containing high-mannose over those bearing complex type oligosaccharides. Can recognize misfolded proteins in the endoplasmic reticulum that are exported to the cytosol to be destroyed and deglycosylate them, while it has no activity toward native proteins. Deglycosylation is a prerequisite for subsequent proteasome-mediated degradation of some, but not all, misfolded glycoproteins. In Candida albicans (strain SC5314 / ATCC MYA-2876) (Yeast), this protein is Peptide-N(4)-(N-acetyl-beta-glucosaminyl)asparagine amidase (PNG1).